The chain runs to 194 residues: 23 kDa U4/U6.U5 small nuclear ribonucleoprotein component (194 aa).

The segment at phenylalanine 80 to histidine 104 adopts a C2H2-type zinc-finger fold.

In terms of assembly, component of the U4/U6-U5 tri-snRNP complex composed of the U4, U6 and U5 snRNAs and at least PRP3, PRP4, PRP6, PRP8, PRP18, PRP31, PRP38, SNU13, SNU23, SNU66, SNU114, SPP381, SMB1, SMD1, SMD2, SMD3, SMX2, SMX3, LSM2, LSM3, LSM4, LSM5, LSM6, LSM7, LSM8, BRR2 and DIB1.

The protein resides in the nucleus. Its function is as follows. Participates in pre-mRNA splicing. Part of the U4/U5/U6 tri-snRNP complex, one of the building blocks of the spliceosome. This is 23 kDa U4/U6.U5 small nuclear ribonucleoprotein component (SNU23) from Saccharomyces cerevisiae (strain ATCC 204508 / S288c) (Baker's yeast).